The primary structure comprises 86 residues: Muscarinic toxin 7 (86 aa).

Residues 1–21 (MKTLLLTLVVVTIVCLDLGYT) form the signal peptide. Finger loop stretches follow at residues 23–37 (TCVK…TSED), 44–63 (LCFK…TRGC), and 66–78 (TCPK…VINC). 4 cysteine pairs are disulfide-bonded: C24-C45, C38-C63, C67-C78, and C79-C84.

The protein belongs to the three-finger toxin family. Short-chain subfamily. Aminergic toxin sub-subfamily. In terms of tissue distribution, expressed by the venom gland.

It is found in the secreted. Functionally, binds specifically and irreversibly to an allosteric site of the muscarinic acetylcholine M1 receptor (CHRM1) at subnanomolar concentrations and shows a very slow dissociation rate. It also inhibits agonist-mediated guanosine 5'-O-(3'-thiotriphosphate) (GTP-g-S) binding and downstream signaling, and decreases the dissociation rate of orthosteric antagonists (N-methylscopolamine (NMS) or pirenzepine). Is a potent negative allosteric modulator (NAM) for CHRM1 activation and a positive allosteric modulator (PAM) for antagonist binding. This is Muscarinic toxin 7 from Dendroaspis angusticeps (Eastern green mamba).